A 1385-amino-acid chain; its full sequence is L-2-aminoadipate reductase large subunit (1385 aa).

The 78-residue stretch at 843 to 920 folds into the Carrier domain; it reads SSFSPLEQEI…ELAKEISRVR (78 aa). Serine 880 carries the O-(pantetheine 4'-phosphoryl)serine modification.

The protein belongs to the ATP-dependent AMP-binding enzyme family. In terms of assembly, heterodimer of an alpha and a beta subunit. Pantetheine 4'-phosphate is required as a cofactor.

The enzyme catalyses (S)-2-amino-6-oxohexanoate + NADP(+) + H2O = L-2-aminoadipate + NADPH + 2 H(+). The catalysed reaction is (S)-2-amino-6-oxohexanoate + NAD(+) + H2O = L-2-aminoadipate + NADH + 2 H(+). It catalyses the reaction (S)-2-amino-6-oxohexanoate + AMP + diphosphate + NADP(+) = L-2-aminoadipate + ATP + NADPH + H(+). Its pathway is amino-acid biosynthesis; L-lysine biosynthesis via AAA pathway; L-lysine from L-alpha-aminoadipate (fungal route): step 1/3. Its function is as follows. Catalyzes the activation of alpha-aminoadipate by ATP-dependent adenylation and the reduction of activated alpha-aminoadipate by NADPH. The activated alpha-aminoadipate is bound to the phosphopantheinyl group of the enzyme itself before it is reduced to (S)-2-amino-6-oxohexanoate. This chain is L-2-aminoadipate reductase large subunit (LYS2), found in Eremothecium gossypii (strain ATCC 10895 / CBS 109.51 / FGSC 9923 / NRRL Y-1056) (Yeast).